Reading from the N-terminus, the 552-residue chain is Probable beta-glucosidase btgE (552 aa).

The N-terminal stretch at 1-18 is a signal peptide; the sequence is MRGAILATAAALAGTAMA. Positions 250–291 are disordered; that stretch reads EPTSAPAAPSTTAVPATTTAAVPSTSSAAPSSSSTAPASTGA. Positions 251–289 are enriched in low complexity; it reads PTSAPAAPSTTAVPATTTAAVPSTSSAAPSSSSTAPAST. Glu392 (proton donor) is an active-site residue. Glu488 acts as the Nucleophile in catalysis.

The protein belongs to the glycosyl hydrolase 17 family.

Its subcellular location is the secreted. The protein localises to the cell wall. The catalysed reaction is Hydrolysis of terminal, non-reducing beta-D-glucosyl residues with release of beta-D-glucose.. It participates in glycan metabolism; cellulose degradation. Beta-glucosidases are one of a number of cellulolytic enzymes involved in the degradation of cellulosic biomass. Catalyzes the last step releasing glucose from the inhibitory cellobiose. This chain is Probable beta-glucosidase btgE (btgE), found in Neosartorya fischeri (strain ATCC 1020 / DSM 3700 / CBS 544.65 / FGSC A1164 / JCM 1740 / NRRL 181 / WB 181) (Aspergillus fischerianus).